A 93-amino-acid polypeptide reads, in one-letter code: Small ribosomal subunit protein uS19 (93 aa).

It belongs to the universal ribosomal protein uS19 family.

Its function is as follows. Protein S19 forms a complex with S13 that binds strongly to the 16S ribosomal RNA. This is Small ribosomal subunit protein uS19 from Helicobacter pylori (strain G27).